A 387-amino-acid chain; its full sequence is S-adenosylmethionine synthase (387 aa).

H16 provides a ligand contact to ATP. D18 contacts Mg(2+). E44 is a K(+) binding site. Residues E57 and Q100 each contribute to the L-methionine site. Residues 100–110 (QSADIAVGVDE) are flexible loop. Residues 165–167 (DAK), D241, 247–248 (RK), A264, and K268 contribute to the ATP site. Residue D241 participates in L-methionine binding. K272 contributes to the L-methionine binding site.

Belongs to the AdoMet synthase family. As to quaternary structure, homotetramer; dimer of dimers. Requires Mg(2+) as cofactor. The cofactor is K(+).

It localises to the cytoplasm. It catalyses the reaction L-methionine + ATP + H2O = S-adenosyl-L-methionine + phosphate + diphosphate. It participates in amino-acid biosynthesis; S-adenosyl-L-methionine biosynthesis; S-adenosyl-L-methionine from L-methionine: step 1/1. In terms of biological role, catalyzes the formation of S-adenosylmethionine (AdoMet) from methionine and ATP. The overall synthetic reaction is composed of two sequential steps, AdoMet formation and the subsequent tripolyphosphate hydrolysis which occurs prior to release of AdoMet from the enzyme. This is S-adenosylmethionine synthase from Marinomonas sp. (strain MWYL1).